Consider the following 370-residue polypeptide: MSFAPLTNDTFLRACRRQATDYTPLWLMRQAGRYLPEYKATRARAGSFMGLATNVDYATEVTLQPLERFPLDAAILFSDILTVPDAMGLGLSFAEGEGPRFAKVVRDEAAVAELAVPDMDKLRYVFDAVTSIRRALDGRVPLIGFSGSPWTLACYMVEGKGSDDYRLVKSLMYARPDLMHRILAINADSVAAYLNAQIDAGAQAVMVFDSWGGVLADGAFQEFSLAYTKRVLAGLNRTGADGQDVPRIVFTKGGGIWLPDMKDLDCEVLGLDWTANLARARAIVGGEVGGPGKALQGNIDPNVLFAPPERVAEQARAVLDSFGAPHTDRTTTGPTHIFNLGHGISQFTPPEHVAALVETVHSHSRALRQR.

Residues 29 to 33 (RQAGR), aspartate 79, tyrosine 155, serine 210, and histidine 342 each bind substrate.

It belongs to the uroporphyrinogen decarboxylase family. Homodimer.

It is found in the cytoplasm. It catalyses the reaction uroporphyrinogen III + 4 H(+) = coproporphyrinogen III + 4 CO2. Its pathway is porphyrin-containing compound metabolism; protoporphyrin-IX biosynthesis; coproporphyrinogen-III from 5-aminolevulinate: step 4/4. In terms of biological role, catalyzes the decarboxylation of four acetate groups of uroporphyrinogen-III to yield coproporphyrinogen-III. The chain is Uroporphyrinogen decarboxylase from Delftia acidovorans (strain DSM 14801 / SPH-1).